Consider the following 471-residue polypeptide: 8-amino-7-oxononanoate synthase (471 aa).

Arginine 40 contacts substrate. Position 131–132 (131–132) interacts with pyridoxal 5'-phosphate; the sequence is GY. Substrate is bound at residue histidine 156. Residues serine 202, histidine 230, and threonine 258 each coordinate pyridoxal 5'-phosphate. Lysine 261 carries the N6-(pyridoxal phosphate)lysine modification. Threonine 377 serves as a coordination point for substrate. The tract at residues 409–471 is disordered; the sequence is SEGQTRREAE…LGAARRETAA (63 aa).

The protein belongs to the class-II pyridoxal-phosphate-dependent aminotransferase family. BioF subfamily. As to quaternary structure, homodimer. It depends on pyridoxal 5'-phosphate as a cofactor.

The catalysed reaction is 6-carboxyhexanoyl-[ACP] + L-alanine + H(+) = (8S)-8-amino-7-oxononanoate + holo-[ACP] + CO2. The protein operates within cofactor biosynthesis; biotin biosynthesis. Its function is as follows. Catalyzes the decarboxylative condensation of pimeloyl-[acyl-carrier protein] and L-alanine to produce 8-amino-7-oxononanoate (AON), [acyl-carrier protein], and carbon dioxide. The sequence is that of 8-amino-7-oxononanoate synthase from Burkholderia ambifaria (strain ATCC BAA-244 / DSM 16087 / CCUG 44356 / LMG 19182 / AMMD) (Burkholderia cepacia (strain AMMD)).